A 178-amino-acid polypeptide reads, in one-letter code: Membrane-spanning protein YciB (178 aa).

5 consecutive transmembrane segments (helical) span residues isoleucine 22–isoleucine 42, leucine 52–serine 72, tryptophan 76–isoleucine 96, leucine 121–phenylalanine 141, and isoleucine 151–phenylalanine 171.

It belongs to the YciB family.

The protein localises to the cell membrane. Its function is as follows. Plays a role in cell envelope biogenesis, maintenance of cell envelope integrity and membrane homeostasis. The chain is Membrane-spanning protein YciB from Buchnera aphidicola subsp. Baizongia pistaciae (strain Bp).